A 197-amino-acid chain; its full sequence is Cytochrome c oxidase polypeptide 5, mitochondrial (197 aa).

The N-terminal 13 residues, 1–13 (MFLRSVTRAAARS), are a transit peptide targeting the mitochondrion. Topologically, residues 14-129 (SAVPTTGLRS…KGENLKIFFK (116 aa)) are mitochondrial matrix. Residues 130-147 (VAQLTLVSFGIFYVIHLF) form a helical membrane-spanning segment. The Mitochondrial intermembrane portion of the chain corresponds to 148–197 (AKPQPKTMTKEWQEASNEYAKQEKINPIYGISAEGYEGKGFVQSPPAEKQ).

It belongs to the cytochrome c oxidase IV family. In terms of assembly, component of the cytochrome c oxidase (complex IV, CIV), a multisubunit enzyme composed of a catalytic core of 3 subunits and seevral supernumerary subunits. The complex exists as a monomer or a dimer and forms supercomplexes (SCs) in the inner mitochondrial membrane with ubiquinol-cytochrome c oxidoreductase (cytochrome b-c1 complex, complex III, CIII).

The protein resides in the mitochondrion inner membrane. The protein operates within energy metabolism; oxidative phosphorylation. Its function is as follows. Component of the cytochrome c oxidase, the last enzyme in the mitochondrial electron transport chain which drives oxidative phosphorylation. The respiratory chain contains 3 multisubunit complexes succinate dehydrogenase (complex II, CII), ubiquinol-cytochrome c oxidoreductase (cytochrome b-c1 complex, complex III, CIII) and cytochrome c oxidase (complex IV, CIV), that cooperate to transfer electrons derived from NADH and succinate to molecular oxygen, creating an electrochemical gradient over the inner membrane that drives transmembrane transport and the ATP synthase. Cytochrome c oxidase is the component of the respiratory chain that catalyzes the reduction of oxygen to water. Electrons originating from reduced cytochrome c in the intermembrane space (IMS) are transferred via the dinuclear copper A center (CU(A)) of subunit 2 and heme A of subunit 1 to the active site in subunit 1, a binuclear center (BNC) formed by heme A3 and copper B (CU(B)). The BNC reduces molecular oxygen to 2 water molecules using 4 electrons from cytochrome c in the IMS and 4 protons from the mitochondrial matrix. The chain is Cytochrome c oxidase polypeptide 5, mitochondrial (cox5) from Aspergillus niger.